A 425-amino-acid polypeptide reads, in one-letter code: Serine--tRNA ligase (425 aa).

230–232 (TAE) is a binding site for L-serine. Residue 261-263 (RAE) participates in ATP binding. Glutamate 284 is an L-serine binding site. Residue 348-351 (EISS) coordinates ATP. Serine 384 contributes to the L-serine binding site.

This sequence belongs to the class-II aminoacyl-tRNA synthetase family. Type-1 seryl-tRNA synthetase subfamily. Homodimer. The tRNA molecule binds across the dimer.

Its subcellular location is the cytoplasm. The enzyme catalyses tRNA(Ser) + L-serine + ATP = L-seryl-tRNA(Ser) + AMP + diphosphate + H(+). It carries out the reaction tRNA(Sec) + L-serine + ATP = L-seryl-tRNA(Sec) + AMP + diphosphate + H(+). The protein operates within aminoacyl-tRNA biosynthesis; selenocysteinyl-tRNA(Sec) biosynthesis; L-seryl-tRNA(Sec) from L-serine and tRNA(Sec): step 1/1. Functionally, catalyzes the attachment of serine to tRNA(Ser). Is also able to aminoacylate tRNA(Sec) with serine, to form the misacylated tRNA L-seryl-tRNA(Sec), which will be further converted into selenocysteinyl-tRNA(Sec). This chain is Serine--tRNA ligase, found in Zymomonas mobilis subsp. mobilis (strain ATCC 31821 / ZM4 / CP4).